The following is a 579-amino-acid chain: Protein PLASTID MOVEMENT IMPAIRED 15 (579 aa).

4 coiled-coil regions span residues 90–161, 188–216, 383–419, and 481–501; these read EVLK…NEEH, KVLDLLVERNKRIKNMLEEAERSKDIEIE, QKTKLDIDKKESELNSKLDELEKVKHTEALVLEKLES, and LMKTETLMRESEMTKAEEERE.

This sequence belongs to the WEB family.

Its function is as follows. Required for the chloroplast avoidance response under high intensity blue light. This avoidance response consists in the relocation of chloroplasts on the anticlinal side of exposed cells. The chain is Protein PLASTID MOVEMENT IMPAIRED 15 (PMI15) from Arabidopsis thaliana (Mouse-ear cress).